A 134-amino-acid polypeptide reads, in one-letter code: MSWQAYVDDHLMCDIEGPEDHRLTAAAIVGHDGSVWAQSATFPQFKPEEMNGIMTDFNEPGHLAPTGLHLGGTKYMVIQGEAGAVVRGKKGSGGITIKKTGQALVFGIYEEPVTPGQCNMVVERLGDYLLEQGL.

Cysteine 13 and cysteine 118 are joined by a disulfide. The Involved in PIP2 interaction signature appears at 84 to 100 (AVVRGKKGSGGITIKKT). Threonine 114 carries the phosphothreonine modification.

Belongs to the profilin family. Occurs in many kinds of cells as a complex with monomeric actin in a 1:1 ratio. Phosphorylated by MAP kinases.

It is found in the cytoplasm. The protein resides in the cytoskeleton. Its function is as follows. Binds to actin and affects the structure of the cytoskeleton. At high concentrations, profilin prevents the polymerization of actin, whereas it enhances it at low concentrations. In Olea europaea (Common olive), this protein is Profilin-1.